We begin with the raw amino-acid sequence, 2210 residues long: RNA-directed RNA polymerase L (2210 aa).

Positions Lys26–Ser285 are endonuclease. Mn(2+)-binding residues include Glu51, Asp88, and Glu101. The active site involves Lys114. Positions Leu1163–Val1359 constitute a RdRp catalytic domain. Position 1319 (Asp1319) interacts with Mg(2+).

The protein belongs to the Bunyavirales RNA polymerase family. Homomultimer; the oligomeric structure is essential for the polymerase activity. Interacts with nucleoprotein N. Interacts with protein Z; this interaction inhibits viral transcription and replication, Z partially blocks the product exit tunnel for the releasing nascent RNA product. Mn(2+) serves as cofactor. It depends on Mg(2+) as a cofactor.

The protein resides in the virion. Its subcellular location is the host cytoplasm. The enzyme catalyses RNA(n) + a ribonucleoside 5'-triphosphate = RNA(n+1) + diphosphate. Its function is as follows. RNA-dependent RNA polymerase, which is responsible for the replication and transcription of the viral RNA genome using antigenomic RNA as an intermediate. During transcription, synthesizes subgenomic RNAs and assures their capping by a cap-snatching mechanism, which involves the endonuclease activity cleaving the host capped pre-mRNAs. These short capped RNAs are then used as primers for viral transcription. The 3'-end of subgenomic mRNAs molecules are heterogeneous and not polyadenylated. The replicase function is to direct synthesis of antigenomic and genomic RNA which are encapsidated and non capped. As a consequence of the use of the same enzyme for both transcription and replication, these mechanisms need to be well coordinated. These processes may be regulated by proteins N and Z in a dose-dependent manner. Z protein inhibits the viral polymerase L und thus the viral transcription and RNA synthesis. In Sigmodon alstoni (PIRV), this protein is RNA-directed RNA polymerase L.